The following is a 1357-amino-acid chain: DNA-directed RNA polymerase subunit beta (1357 aa).

This sequence belongs to the RNA polymerase beta chain family. As to quaternary structure, the RNAP catalytic core consists of 2 alpha, 1 beta, 1 beta' and 1 omega subunit. When a sigma factor is associated with the core the holoenzyme is formed, which can initiate transcription.

It catalyses the reaction RNA(n) + a ribonucleoside 5'-triphosphate = RNA(n+1) + diphosphate. DNA-dependent RNA polymerase catalyzes the transcription of DNA into RNA using the four ribonucleoside triphosphates as substrates. The protein is DNA-directed RNA polymerase subunit beta of Hahella chejuensis (strain KCTC 2396).